A 1267-amino-acid polypeptide reads, in one-letter code: RNA-directed RNA polymerase lambda-3 (1267 aa).

Residues L555–I792 form the RdRp catalytic domain.

The protein belongs to the reoviridae RNA-directed RNA polymerase family.

The protein resides in the virion. It carries out the reaction RNA(n) + a ribonucleoside 5'-triphosphate = RNA(n+1) + diphosphate. Functionally, RNA-directed RNA polymerase that is involved in transcription and genome replication. Following infection, it catalyzes the synthesis of fully conservative plus strands. After core assembly, which consists in recruitment of one capped plus-strand for each genomic segments and polymerase complexes, the polymerase switches mode and catalyzes the synthesis of complementary minus-strands. This Reovirus type 3 (strain Dearing) (T3D) protein is RNA-directed RNA polymerase lambda-3 (L1).